Here is a 683-residue protein sequence, read N- to C-terminus: Kinesin-like protein KIF2B (683 aa).

Thr125 bears the Phosphothreonine; by PLK1 mark. Positions Leu141–Arg176 form a coiled coil. Ser204 is modified (phosphoserine; by PLK1). A Kinesin motor domain is found at Arg213–Ile543. Gly303 to Thr310 serves as a coordination point for ATP. Positions Gln640 to His672 form a coiled coil.

Belongs to the TRAFAC class myosin-kinesin ATPase superfamily. Kinesin family. MCAK/KIF2 subfamily. Post-translationally, phosphorylation at Thr-125 by PLK1 is required for activity in the correction of kinetochore-microtubules attachment errors, while phosphorylation at Ser-204 also by PLK1 is required for the kinetochore localization and activity in prometaphase.

It is found in the cytoplasm. It localises to the cytoskeleton. Its subcellular location is the microtubule organizing center. The protein resides in the centrosome. The protein localises to the spindle. It is found in the chromosome. It localises to the centromere. Its subcellular location is the kinetochore. Its function is as follows. Plus end-directed microtubule-dependent motor required for spindle assembly and chromosome movement during mitosis. Has microtubule depolymerization activity. Plays a role in chromosome congression. The sequence is that of Kinesin-like protein KIF2B from Bos taurus (Bovine).